The following is a 310-amino-acid chain: Protease HtpX homolog (310 aa).

2 helical membrane passes run Ser-7 to Gly-27 and Ala-29 to Ser-49. His-131 contacts Zn(2+). Residue Glu-132 is part of the active site. His-135 lines the Zn(2+) pocket. 2 helical membrane passes run Ile-141–Ala-161 and Pro-178–Ile-198. Zn(2+) is bound at residue Glu-207. Residues Leu-277–Lys-310 form a disordered region. Basic and acidic residues predominate over residues Arg-293–Lys-310.

The protein belongs to the peptidase M48B family. Zn(2+) serves as cofactor.

It is found in the cell inner membrane. The chain is Protease HtpX homolog from Desulfatibacillum aliphaticivorans.